Reading from the N-terminus, the 99-residue chain is MPDLKIILEFSAGAELLFGNIKRRELALDGDQKWTIANLLKWMHANILTERPELFIQESTVRPGILVLINDTDWELLGELDYELQQNDNVLFISTLHGG.

The residue at position 99 (Gly99) is a 1-thioglycine. Residue Gly99 forms a Glycyl lysine isopeptide (Gly-Lys) (interchain with K-? in acceptor proteins) linkage.

Belongs to the URM1 family. Interacts with cer. Post-translationally, C-terminal thiocarboxylation occurs in 2 steps, it is first acyl-adenylated (-COAMP) via the hesA/moeB/thiF part of the MOCS3 homolog, then thiocarboxylated (-COSH) via the rhodanese domain of the MOCS3 homolog.

It is found in the cytoplasm. It functions in the pathway tRNA modification; 5-methoxycarbonylmethyl-2-thiouridine-tRNA biosynthesis. In terms of biological role, acts as a sulfur carrier required for 2-thiolation of mcm(5)S(2)U at tRNA wobble positions of cytosolic tRNA(Lys), tRNA(Glu) and tRNA(Gln). Serves as sulfur donor in tRNA 2-thiolation reaction by being thiocarboxylated (-COSH) at its C-terminus by MOCS3. The sulfur is then transferred to tRNA to form 2-thiolation of mcm(5)S(2)U. Also acts as a ubiquitin-like protein (UBL) that is covalently conjugated via an isopeptide bond to lysine residues of target proteins such as Prx2/Jafrac1, Ciao1, Eip71CD and GILT1. The thiocarboxylated form serves as substrate for conjugation and oxidative stress specifically induces the formation of UBL-protein conjugates. This is Ubiquitin-related modifier 1 homolog from Drosophila virilis (Fruit fly).